Here is a 262-residue protein sequence, read N- to C-terminus: Lipoate-protein ligase A subunit 1 (262 aa).

The region spanning 30–226 is the BPL/LPL catalytic domain; that stretch reads YGDKPILRFY…GFSETLHIDF (197 aa). ATP-binding residues include R72, G77, Y80, D85, P132, and K135. The Mg(2+) site is built by T137 and D138. ATP-binding residues include K145, A149, and A163. K145 provides a ligand contact to (R)-lipoate. A149 serves as a coordination point for Mg(2+).

This sequence belongs to the LplA family. In terms of assembly, heterodimer composed of LplA and LplB.

The protein localises to the cytoplasm. The catalysed reaction is L-lysyl-[lipoyl-carrier protein] + (R)-lipoate + ATP = N(6)-[(R)-lipoyl]-L-lysyl-[lipoyl-carrier protein] + AMP + diphosphate + H(+). The protein operates within protein modification; protein lipoylation via exogenous pathway; protein N(6)-(lipoyl)lysine from lipoate: step 1/2. Its pathway is protein modification; protein lipoylation via exogenous pathway; protein N(6)-(lipoyl)lysine from lipoate: step 2/2. In terms of biological role, part of a lipoate-protein ligase complex that catalyzes both the ATP-dependent activation of exogenously supplied lipoate to lipoyl-AMP and the transfer of the activated lipoyl onto the lipoyl domains of lipoate-dependent enzymes. Can also use octanoate as substrate. In Thermoplasma acidophilum (strain ATCC 25905 / DSM 1728 / JCM 9062 / NBRC 15155 / AMRC-C165), this protein is Lipoate-protein ligase A subunit 1 (lplA).